Reading from the N-terminus, the 213-residue chain is Charged multivesicular body protein 2b (213 aa).

At Ala2 the chain carries N-acetylalanine. Residues 25–55 (QRAIIRDRAALEKQEKQLELEIKKMAKIGNK) adopt a coiled-coil conformation. Residues 179–194 (AKAPSAARSLPSASTS) show a composition bias toward low complexity. Residues 179 to 199 (AKAPSAARSLPSASTSKATIS) are disordered. Ser199 is subject to Phosphoserine. The MIT-interacting motif signature appears at 201-211 (EEIERQLKALG).

The protein belongs to the SNF7 family. In terms of assembly, probable core component of the endosomal sorting required for transport complex III (ESCRT-III). ESCRT-III components are thought to multimerize to form a flat lattice on the perimeter membrane of the endosome. Several assembly forms of ESCRT-III may exist that interact and act sequentially. Interacts with CHMP2A. Interacts with VPS4A. Interacts with VPS4B; the interaction is direct. In terms of tissue distribution, widely expressed. Expressed in brain, heart, skeletal muscle, spleen, kidney, liver, small intestine, pancreas, lung, placenta and leukocytes. In brain, it is expressed in cerebellum, cerebral cortex, medulla, spinal cord, occipital lobe, frontal lobe, temporal lobe and putamen.

Its subcellular location is the cytoplasm. The protein resides in the cytosol. The protein localises to the late endosome membrane. In terms of biological role, probable core component of the endosomal sorting required for transport complex III (ESCRT-III) which is involved in multivesicular bodies (MVBs) formation and sorting of endosomal cargo proteins into MVBs. MVBs contain intraluminal vesicles (ILVs) that are generated by invagination and scission from the limiting membrane of the endosome and mostly are delivered to lysosomes enabling degradation of membrane proteins, such as stimulated growth factor receptors, lysosomal enzymes and lipids. The MVB pathway appears to require the sequential function of ESCRT-O, -I,-II and -III complexes. ESCRT-III proteins mostly dissociate from the invaginating membrane before the ILV is released. The ESCRT machinery also functions in topologically equivalent membrane fission events, such as the terminal stages of cytokinesis and the budding of enveloped viruses (HIV-1 and other lentiviruses). ESCRT-III proteins are believed to mediate the necessary vesicle extrusion and/or membrane fission activities, possibly in conjunction with the AAA ATPase VPS4. This Homo sapiens (Human) protein is Charged multivesicular body protein 2b (CHMP2B).